Consider the following 629-residue polypeptide: tRNA uridine 5-carboxymethylaminomethyl modification enzyme MnmG (629 aa).

FAD is bound by residues 13–18 (GGGHAG), V125, and S180. An NAD(+)-binding site is contributed by 273–287 (GPRYCPSIEDKVMRF). Residue Q370 coordinates FAD.

This sequence belongs to the MnmG family. Homodimer. Heterotetramer of two MnmE and two MnmG subunits. FAD serves as cofactor.

It localises to the cytoplasm. Its function is as follows. NAD-binding protein involved in the addition of a carboxymethylaminomethyl (cmnm) group at the wobble position (U34) of certain tRNAs, forming tRNA-cmnm(5)s(2)U34. This is tRNA uridine 5-carboxymethylaminomethyl modification enzyme MnmG from Salmonella paratyphi A (strain ATCC 9150 / SARB42).